The chain runs to 92 residues: Small ribosomal subunit protein uS19 (92 aa).

Its function is as follows. Protein S19 forms a complex with S13 that binds strongly to the 16S ribosomal RNA. The polypeptide is Small ribosomal subunit protein uS19 (Rhodopseudomonas palustris (strain ATCC BAA-98 / CGA009)).